The following is a 126-amino-acid chain: Histone H2B type 1-N (126 aa).

A compositionally biased stretch (low complexity) spans 1–12 (MPEPSKSAPAPK). The interval 1–36 (MPEPSKSAPAPKKGSKKAVTKAQKKDGKKRKRSRKE) is disordered. N-acetylproline is present on Pro2. The residue at position 3 (Glu3) is an ADP-ribosyl glutamic acid. The residue at position 6 (Lys6) is an N6-(2-hydroxyisobutyryl)lysine; alternate. Lys6 carries the N6-(beta-hydroxybutyryl)lysine; alternate modification. Lys6 is subject to N6-acetyllysine; alternate. At Lys6 the chain carries N6-butyryllysine; alternate. Residue Lys6 is modified to N6-crotonyllysine; alternate. At Lys6 the chain carries N6-lactoyllysine; alternate. Lys6 is covalently cross-linked (Glycyl lysine isopeptide (Lys-Gly) (interchain with G-Cter in SUMO2); alternate). Ser7 carries the post-translational modification ADP-ribosylserine. Residue Lys12 is modified to N6-(beta-hydroxybutyryl)lysine; alternate. Residues Lys12 and Lys13 each carry the N6-acetyllysine; alternate modification. N6-crotonyllysine; alternate is present on residues Lys12 and Lys13. The residue at position 12 (Lys12) is an N6-lactoyllysine; alternate. Position 13 is an N6-(2-hydroxyisobutyryl)lysine; alternate (Lys13). Ser15 carries the phosphoserine; by STK4/MST1 modification. Residues Lys16, Lys17, Lys21, and Lys24 each carry the N6-acetyllysine; alternate modification. Residues Lys16, Lys17, Lys21, and Lys24 each carry the N6-crotonyllysine; alternate modification. An N6-lactoyllysine; alternate mark is found at Lys16, Lys17, Lys21, and Lys24. 2 positions are modified to N6-(beta-hydroxybutyryl)lysine; alternate: Lys17 and Lys21. The residue at position 17 (Lys17) is an N6-glutaryllysine; alternate. Residues Lys21 and Lys24 each carry the N6-(2-hydroxyisobutyryl)lysine; alternate modification. The residue at position 21 (Lys21) is an N6-butyryllysine; alternate. Lys21 is covalently cross-linked (Glycyl lysine isopeptide (Lys-Gly) (interchain with G-Cter in SUMO2); alternate). Lys25 carries the N6-(2-hydroxyisobutyryl)lysine modification. N6-(2-hydroxyisobutyryl)lysine; alternate is present on Lys35. Lys35 carries the N6-(beta-hydroxybutyryl)lysine; alternate modification. Lys35 bears the N6-crotonyllysine; alternate mark. At Lys35 the chain carries N6-glutaryllysine; alternate. The residue at position 35 (Lys35) is an N6-succinyllysine; alternate. Lys35 is covalently cross-linked (Glycyl lysine isopeptide (Lys-Gly) (interchain with G-Cter in ubiquitin); alternate). Glu36 carries the polyADP-ribosyl glutamic acid modification. The residue at position 37 (Ser37) is a Phosphoserine; by AMPK. N6-(2-hydroxyisobutyryl)lysine; alternate is present on residues Lys44, Lys47, and Lys58. Position 44 is an N6-lactoyllysine; alternate (Lys44). Residues Lys44 and Lys47 each carry the N6-glutaryllysine; alternate modification. N6-methyllysine; alternate is present on Lys47. Residue Lys58 is modified to N6,N6-dimethyllysine; alternate. At Arg80 the chain carries Dimethylated arginine. At Lys86 the chain carries N6-(2-hydroxyisobutyryl)lysine; alternate. Position 86 is an N6-(beta-hydroxybutyryl)lysine; alternate (Lys86). An N6-acetyllysine; alternate modification is found at Lys86. At Lys86 the chain carries N6-lactoyllysine; alternate. Residue Lys86 is modified to N6,N6,N6-trimethyllysine; alternate. An omega-N-methylarginine mark is found at Arg87 and Arg93. Residue Lys109 is modified to N6-(2-hydroxyisobutyryl)lysine; alternate. The residue at position 109 (Lys109) is an N6-lactoyllysine; alternate. Lys109 is subject to N6-glutaryllysine; alternate. Residue Lys109 is modified to N6-methyllysine; alternate. O-linked (GlcNAc) serine glycosylation occurs at Ser113. Thr116 is subject to Phosphothreonine. N6-(2-hydroxyisobutyryl)lysine; alternate occurs at positions 117 and 121. N6-(beta-hydroxybutyryl)lysine; alternate is present on residues Lys117 and Lys121. N6-lactoyllysine; alternate occurs at positions 117 and 121. 2 positions are modified to N6-glutaryllysine; alternate: Lys117 and Lys121. N6-succinyllysine; alternate is present on residues Lys117 and Lys121. The residue at position 117 (Lys117) is an N6-malonyllysine; alternate. At Lys117 the chain carries N6-methylated lysine; alternate. Residue Lys121 forms a Glycyl lysine isopeptide (Lys-Gly) (interchain with G-Cter in ubiquitin); alternate linkage.

It belongs to the histone H2B family. In terms of assembly, the nucleosome is a histone octamer containing two molecules each of H2A, H2B, H3 and H4 assembled in one H3-H4 heterotetramer and two H2A-H2B heterodimers. The octamer wraps approximately 147 bp of DNA. Monoubiquitination at Lys-35 (H2BK34Ub) by the MSL1/MSL2 dimer is required for histone H3 'Lys-4' (H3K4me) and 'Lys-79' (H3K79me) methylation and transcription activation at specific gene loci, such as HOXA9 and MEIS1 loci. Similarly, monoubiquitination at Lys-121 (H2BK120Ub) by the RNF20/40 complex gives a specific tag for epigenetic transcriptional activation and is also prerequisite for histone H3 'Lys-4' and 'Lys-79' methylation. It also functions cooperatively with the FACT dimer to stimulate elongation by RNA polymerase II. H2BK120Ub also acts as a regulator of mRNA splicing: deubiquitination by USP49 is required for efficient cotranscriptional splicing of a large set of exons. In terms of processing, phosphorylation at Ser-37 (H2BS36ph) by AMPK in response to stress promotes transcription. Phosphorylated on Ser-15 (H2BS14ph) by STK4/MST1 during apoptosis; which facilitates apoptotic chromatin condensation. Also phosphorylated on Ser-15 in response to DNA double strand breaks (DSBs), and in correlation with somatic hypermutation and immunoglobulin class-switch recombination. Post-translationally, glcNAcylation at Ser-113 promotes monoubiquitination of Lys-121. It fluctuates in response to extracellular glucose, and associates with transcribed genes. ADP-ribosylated by PARP1 or PARP2 on Ser-7 (H2BS6ADPr) in response to DNA damage. H2BS6ADPr promotes recruitment of CHD1L. Mono-ADP-ribosylated on Glu-3 (H2BE2ADPr) by PARP3 in response to single-strand breaks. Poly ADP-ribosylation on Glu-36 (H2BE35ADPr) by PARP1 regulates adipogenesis: it inhibits phosphorylation at Ser-37 (H2BS36ph), thereby blocking expression of pro-adipogenetic genes. In terms of processing, crotonylation (Kcr) is specifically present in male germ cells and marks testis-specific genes in post-meiotic cells, including X-linked genes that escape sex chromosome inactivation in haploid cells. Crotonylation marks active promoters and enhancers and confers resistance to transcriptional repressors. It is also associated with post-meiotically activated genes on autosomes. Post-translationally, lactylated in macrophages by EP300/P300 by using lactoyl-CoA directly derived from endogenous or exogenous lactate, leading to stimulates gene transcription.

The protein resides in the nucleus. Its subcellular location is the chromosome. Its function is as follows. Core component of nucleosome. Nucleosomes wrap and compact DNA into chromatin, limiting DNA accessibility to the cellular machineries which require DNA as a template. Histones thereby play a central role in transcription regulation, DNA repair, DNA replication and chromosomal stability. DNA accessibility is regulated via a complex set of post-translational modifications of histones, also called histone code, and nucleosome remodeling. In Homo sapiens (Human), this protein is Histone H2B type 1-N.